The primary structure comprises 180 residues: Large ribosomal subunit protein uL6 (180 aa).

Belongs to the universal ribosomal protein uL6 family. As to quaternary structure, part of the 50S ribosomal subunit.

Its function is as follows. This protein binds to the 23S rRNA, and is important in its secondary structure. It is located near the subunit interface in the base of the L7/L12 stalk, and near the tRNA binding site of the peptidyltransferase center. The sequence is that of Large ribosomal subunit protein uL6 from Bdellovibrio bacteriovorus (strain ATCC 15356 / DSM 50701 / NCIMB 9529 / HD100).